Consider the following 220-residue polypeptide: Nucleolar protein 3 (220 aa).

Gly2 carries the N-myristoyl glycine lipid modification. Residues 4–95 form the CARD domain; the sequence is VQERPSETID…MPDPAWDWQH (92 aa). Residues 20-70 are essential for interaction with BAX; that stretch reads VETLQADSGLLLDALVARGVLTGPEYEALDALPDAERRVRRLLLLVQSKGE. A disordered region spans residues 111–220; that stretch reads GHWTPEAPSS…FQEEDESEDS (110 aa). Thr149 carries the phosphothreonine; by CK2 modification. The segment covering 152-220 has biased composition (acidic residues); sequence EPELEAEATE…FQEEDESEDS (69 aa).

In terms of assembly, oligomerizes (via CARD doamin). Interacts (via CARD domain) with CASP2; inhibits CASP2 activity in a phosphorylation-dependent manner. Interacts with CASP8; decreases CASP8 activity in a mitochondria localization- and phosphorylation-dependent manner and this interaction is dissociated by calcium. Interacts with TFPT; translocates NOL3 into the nucleus and negatively regulated TFPT-induced cell death. Interacts directly (via CARD domain) with FAS and FADD (via DED domain); inhibits death-inducing signaling complex (DISC) assembly by inhibiting the increase in FAS-FADD binding induced by FAS activation. Interacts (via CARD domain) with BAX (via a C-terminal 33 residues); inhibits BAX activation and translocation and consequently cytochrome c release from mitochondria. Interacts with PPM1G; may dephosphorylate NOL3. Interacts (via CARD domain) with BBC3 (via BH3 domain); preventing the association of BBC3 with BCL2 and resulting in activation of CASP8. Interacts (via CARD domain) with BAD(via BH3 domain); preventing the association of BAD with BCL2. Interacts directly (via CARD domain) with TNFRSF1A; inhibits TNF-signaling pathway. In terms of processing, phosphorylation at Thr-149 is required for its antiapoptotic effect by blocking death-inducing signaling complex death-inducing signaling complex (DISC) activity through the control of interaction with CASP8. Phosphorylation at Thr-149 results in translocation to mitochondria and this translocation enables the binding to CASP8. Dephosphorylated at Thr-149 by calcineurin; doesn't inhibit the association between FADD and CASP8 and the consequent apoptosis. Polyubiquitinated by MDM2; promoting proteasomal-dependent degradation in response to apoptotic stimuli.

It is found in the cytoplasm. The protein localises to the mitochondrion. It localises to the sarcoplasmic reticulum. The protein resides in the membrane. In terms of biological role, apoptosis repressor that blocks multiple modes of cell death. Inhibits extrinsic apoptotic pathways through two different ways. Firstly by interacting with FAS and FADD upon FAS activation blocking death-inducing signaling complex (DISC) assembly. Secondly by interacting with CASP8 in a mitochondria localization- and phosphorylation-dependent manner, limiting the amount of soluble CASP8 available for DISC-mediated activation. Inhibits intrinsic apoptotic pathway in response to a wide range of stresses, through its interaction with BAX resulting in BAX inactivation, preventing mitochondrial dysfunction and release of pro-apoptotic factors. Inhibits calcium-mediated cell death by functioning as a cytosolic calcium buffer, dissociating its interaction with CASP8 and maintaining calcium homeostasis. Negatively regulates oxidative stress-induced apoptosis by phosphorylation-dependent suppression of the mitochondria-mediated intrinsic pathway, by blocking CASP2 activation and BAX translocation. Negatively regulates hypoxia-induced apoptosis in part by inhibiting the release of cytochrome c from mitochondria in a caspase-independent manner. Also inhibits TNF-induced necrosis by preventing TNF-signaling pathway through TNFRSF1A interaction abrogating the recruitment of RIPK1 to complex I. Finally through its role as apoptosis repressor, promotes vascular remodeling through inhibition of apoptosis and stimulation of proliferation, in response to hypoxia. Inhibits too myoblast differentiation through caspase inhibition. This is Nucleolar protein 3 (Nol3) from Mus musculus (Mouse).